Consider the following 938-residue polypeptide: Protein translocase subunit SecA 1 (938 aa).

Residues glutamine 84, 102 to 106, and aspartate 491 each bind ATP; that span reads GEGKT. The tract at residues 865-938 is disordered; that stretch reads QTGGVATKER…QKTGRHAKRR (74 aa). The span at 918-927 shows a compositional bias: basic and acidic residues; that stretch reads TRKERREAAR.

It belongs to the SecA family. In terms of assembly, monomer and homodimer. Part of the essential Sec protein translocation apparatus which comprises SecA, SecYEG and auxiliary proteins SecDF. Other proteins may also be involved.

It localises to the cell membrane. Its subcellular location is the cytoplasm. It catalyses the reaction ATP + H2O + cellular proteinSide 1 = ADP + phosphate + cellular proteinSide 2.. Functionally, part of the Sec protein translocase complex. Interacts with the SecYEG preprotein conducting channel. Has a central role in coupling the hydrolysis of ATP to the transfer of proteins into and across the cell membrane, serving as an ATP-driven molecular motor driving the stepwise translocation of polypeptide chains across the membrane. The sequence is that of Protein translocase subunit SecA 1 from Mycolicibacterium vanbaalenii (strain DSM 7251 / JCM 13017 / BCRC 16820 / KCTC 9966 / NRRL B-24157 / PYR-1) (Mycobacterium vanbaalenii).